Here is a 75-residue protein sequence, read N- to C-terminus: Large ribosomal subunit protein bL31 (75 aa).

Zn(2+)-binding residues include Cys-16, Cys-18, Cys-36, and Cys-39.

It belongs to the bacterial ribosomal protein bL31 family. Type A subfamily. In terms of assembly, part of the 50S ribosomal subunit. Zn(2+) serves as cofactor.

Functionally, binds the 23S rRNA. The chain is Large ribosomal subunit protein bL31 from Desulforapulum autotrophicum (strain ATCC 43914 / DSM 3382 / VKM B-1955 / HRM2) (Desulfobacterium autotrophicum).